Consider the following 95-residue polypeptide: Large ribosomal subunit protein bL25 (95 aa).

The segment at 1–20 (MSFKFNAEVRSKQGKGASRR) is disordered.

The protein belongs to the bacterial ribosomal protein bL25 family. As to quaternary structure, part of the 50S ribosomal subunit; part of the 5S rRNA/L5/L18/L25 subcomplex. Contacts the 5S rRNA. Binds to the 5S rRNA independently of L5 and L18.

This is one of the proteins that binds to the 5S RNA in the ribosome where it forms part of the central protuberance. In Histophilus somni (strain 129Pt) (Haemophilus somnus), this protein is Large ribosomal subunit protein bL25.